The sequence spans 121 residues: Ribosome-binding factor A (121 aa).

Belongs to the RbfA family. As to quaternary structure, monomer. Binds 30S ribosomal subunits, but not 50S ribosomal subunits or 70S ribosomes.

It localises to the cytoplasm. In terms of biological role, one of several proteins that assist in the late maturation steps of the functional core of the 30S ribosomal subunit. Associates with free 30S ribosomal subunits (but not with 30S subunits that are part of 70S ribosomes or polysomes). Required for efficient processing of 16S rRNA. May interact with the 5'-terminal helix region of 16S rRNA. The protein is Ribosome-binding factor A of Finegoldia magna (strain ATCC 29328 / DSM 20472 / WAL 2508) (Peptostreptococcus magnus).